The primary structure comprises 524 residues: Caffeate CoA-transferase (524 aa).

E323 functions as the 5-glutamyl coenzyme A thioester intermediate in the catalytic mechanism.

This sequence belongs to the 3-oxoacid CoA-transferase family. As to quaternary structure, homodimer.

The enzyme catalyses hydrocaffeoyl-CoA + (E)-caffeate = 3-(3,4-dihydroxyphenyl)propanoate + (E)-caffeoyl-CoA. Functionally, involved in caffeate respiration, which consists in the reduction of the C-C double bond of caffeate. CarA catalyzes an energy-saving CoA loop for caffeate activation in the steady state of caffeate respiration. It catalyzes the formation of caffeyl-CoA from caffeate with hydrocaffeyl-CoA as the CoA donor via a ping-pong mechanism. In addition to caffeate, the enzyme can utilize 4-coumarate or ferulate as CoA acceptor. Neither acetyl-CoA nor butyryl-CoA served as the CoA donor. The polypeptide is Caffeate CoA-transferase (Acetobacterium woodii).